The following is a 674-amino-acid chain: 1,4-alpha-glucan branching enzyme GlgB 1 (674 aa).

Aspartate 336 functions as the Nucleophile in the catalytic mechanism. Catalysis depends on glutamate 389, which acts as the Proton donor.

The protein belongs to the glycosyl hydrolase 13 family. GlgB subfamily. As to quaternary structure, monomer.

The enzyme catalyses Transfers a segment of a (1-&gt;4)-alpha-D-glucan chain to a primary hydroxy group in a similar glucan chain.. Its pathway is glycan biosynthesis; glycogen biosynthesis. Functionally, catalyzes the formation of the alpha-1,6-glucosidic linkages in glycogen by scission of a 1,4-alpha-linked oligosaccharide from growing alpha-1,4-glucan chains and the subsequent attachment of the oligosaccharide to the alpha-1,6 position. The sequence is that of 1,4-alpha-glucan branching enzyme GlgB 1 (glgB1) from Clostridium perfringens (strain 13 / Type A).